A 318-amino-acid chain; its full sequence is Melanocyte-stimulating hormone receptor (318 aa).

Residues 1-37 (MPMQGAQRKLLGSLNSTPTATSNLGLAANRTGAPCLE) are Extracellular-facing. N29 is a glycosylation site (N-linked (GlcNAc...) asparagine). The helical transmembrane segment at 38–63 (LPIPNGLFLSLGLVSLVENVLVVAAI) threads the bilayer. Residues 64–72 (AKNRNLHSS) lie on the Cytoplasmic side of the membrane. A helical transmembrane segment spans residues 73 to 93 (MYCFICCLALSDLLVSGSNML). Topologically, residues 94–118 (ETAVILLLEAGVLATRASVVQQLHN) are extracellular. Residues 119 to 140 (TIDVLTCSSMLCSLCFLGAIAV) form a helical membrane-spanning segment. The Cytoplasmic segment spans residues 141–163 (DRYISIFYALRYHSIMTLPRAQR). A helical membrane pass occupies residues 164 to 183 (AVAAIWVASVLSSTLFITYY). Residues 184–191 (DHAAVLLC) are Extracellular-facing. Residues 192-211 (LMVFFLAMLVLMAVLYVHML) traverse the membrane as a helical segment. Over 212–240 (ARARQHAQGIIRLHKRQPPAHKGFGLRGA) the chain is Cytoplasmic. A helical membrane pass occupies residues 241 to 266 (ATLTILLGIFFLCWGPFFLCLTLVVF). The Extracellular segment spans residues 267 to 279 (CPQHLTCNCIFKN). Residues 280–300 (FKVFLTLIICNTIIDPLIYAF) form a helical membrane-spanning segment. Residues 301 to 317 (RSQELRRMLKEVLGRGR) lie on the Cytoplasmic side of the membrane.

It belongs to the G-protein coupled receptor 1 family. Interacts with MGRN1, but does not undergo MGRN1-mediated ubiquitination; this interaction competes with GNAS-binding and thus inhibits agonist-induced cAMP production. Interacts with OPN3; the interaction results in a decrease in MC1R-mediated cAMP signaling and ultimately a decrease in melanin production in melanocytes.

The protein localises to the cell membrane. Its function is as follows. Receptor for MSH (alpha, beta and gamma) and ACTH. The activity of this receptor is mediated by G proteins which activate adenylate cyclase. Mediates melanogenesis, the production of eumelanin (black/brown) and phaeomelanin (red/yellow), via regulation of cAMP signaling in melanocytes. This Leontopithecus rosalia (Golden lion tamarin) protein is Melanocyte-stimulating hormone receptor (MC1R).